The following is a 533-amino-acid chain: Retinoid isomerohydrolase (533 aa).

N-acetylserine is present on S2. Residues T101 and T105 each carry the phosphothreonine modification. The S-palmitoyl cysteine; in membrane form moiety is linked to residue C112. Residue K113 is modified to N6-acetyllysine. A Phosphoserine modification is found at S117. H180 is a binding site for Fe cation. C231 is lipidated: S-palmitoyl cysteine; in membrane form. Fe cation-binding residues include H241 and H313. Residues C329 and C330 are each lipidated (S-palmitoyl cysteine; in membrane form). H527 provides a ligand contact to Fe cation.

This sequence belongs to the carotenoid oxygenase family. As to quaternary structure, interacts with MYO7A; this mediates light-dependent intracellular transport of RPE65. It depends on Fe(2+) as a cofactor. In terms of processing, palmitoylation by LRAT regulates ligand binding specificity; the palmitoylated form (membrane form) specifically binds all-trans-retinyl-palmitate, while the soluble unpalmitoylated form binds all-trans-retinol (vitamin A). Retinal pigment epithelium specific.

Its subcellular location is the cytoplasm. It localises to the cell membrane. It is found in the microsome membrane. The enzyme catalyses an all-trans-retinyl ester + H2O = 11-cis-retinol + a fatty acid + H(+). It carries out the reaction lutein = (3R,3'S)-zeaxanthin. It catalyses the reaction all-trans-retinyl hexadecanoate + H2O = 11-cis-retinol + hexadecanoate + H(+). Its function is as follows. Critical isomerohydrolase in the retinoid cycle involved in regeneration of 11-cis-retinal, the chromophore of rod and cone opsins. Catalyzes the cleavage and isomerization of all-trans-retinyl fatty acid esters to 11-cis-retinol which is further oxidized by 11-cis retinol dehydrogenase to 11-cis-retinal for use as visual chromophore. Essential for the production of 11-cis retinal for both rod and cone photoreceptors. Also capable of catalyzing the isomerization of lutein to meso-zeaxanthin an eye-specific carotenoid. The soluble form binds vitamin A (all-trans-retinol), making it available for LRAT processing to all-trans-retinyl ester. The membrane form, palmitoylated by LRAT, binds all-trans-retinyl esters, making them available for IMH (isomerohydrolase) processing to all-cis-retinol. The soluble form is regenerated by transferring its palmitoyl groups onto 11-cis-retinol, a reaction catalyzed by LRAT. This chain is Retinoid isomerohydrolase (Rpe65), found in Mus musculus (Mouse).